Reading from the N-terminus, the 1282-residue chain is MVRLREIPRTATFAWSPGAASPLIATGTRAGAVDADFSNETCLELWDLALGNEDAGAELQPVAKIDTDSGFNDLAWTDSEDNSRGIIAGGLESGSLGLWDADKLLSGASDAVLSKSSKHSGAIKALQFNPRHSSLLATGGAKGELYISDLNDLENPYRLGSSTARADDIECLDWNKKVAHILVTGSSAGFVTVWDVKTRKESLTLNNMGRKAVSAVAWDPTKPTKLVTATPHESDPIINLWDLRNSHAPERTLRGHEAGVLSLSWCNQDPDLLLSSGKDNRTICWNPQTGISYGEFPVVTNWTFQTRWNPRNPNFFATASFDGRISIQTIQNTSTETAKAVADQNQALDGEDFFAKAQSQPQVSSFSLPKAPKWLERPCSSTFGFGGRVVSVNLLEKGGRASKIKITPFEVDEAVGKSTETFESALKEGDLKSICENRITSAATEEEKSDWRVIDALLSDSPRKGLVEYLGFNDQAEDVSEGLAKLGLSKEDEVNGEAAPKESRRPGARKHKRLQSMFDASPDDNFLSDLAASKGAKTNNPFQIFNGEESEADKNITRALLLGDFEKALDHALKEDRMSDAFMIAIVGGQKCIEKAQEHYFSKQTESPNYVRLLASVVGKNLWDVVYNADLSNWKEIMVALCTFADEKDFADLCDALGDRLEEQIRNTGDKAIRKDASLCYLAGSKLEKVVSIWIEEQRENEQAAIETAAEDSSFSIHVRALQSLIEKVTIFRQVTKFEDSERTKDCDWKLSVLYDKYIEYADVVATHGRLQVAQKYLDLVPEKHPEAEIARNRIKLAMRQPTTRAQPATSTARVVSNKPLPQPAAYQPPTTFSAGARAATPTSYAPPAPAANPYAPPAAASNPYAPPVAASNPYAPTAAAANPYAPSAAAPSQSTNPYAPAGGSYAPAAGYQPRQQSFGAPPPSVGGVPPPPRASSQSPATVTTYTTAKNLPAWNDLPEGFAKQPVSRRGTPASSAPISSPFPNQSPAVSQGPPPAGAGPQRTPSVPPPPKGVPPPPRMTSPPSAGQAPPNPLSAVPPPPANPYAAVPQSPSVGSMAPPASIPRGSSPYNAPPTIPPPSNRYAPSPAAQAASPQLQARAPVPPPPQAAASPYAPPPPAQPLAANPYAPSTPPPMQPPLQQVPPPQSAGSRPSTASSVKKASPAPPKYPPGDRSHIPAEARPIFEILSEDMQRVKSRAPSSFKAQVDDAERRLNFLFDHLNNEDLLKPNTVQDMVQLARAIQARDYETARTIHIDIMTNRTDECGNWMVGVKRLISMSKVTP.

WD repeat units follow at residues 7-47 (IPRT…ELWD), 66-109 (DTDS…SGAS), 118-158 (KHSG…NPYR), 164-204 (ARAD…ESLT), 208-251 (MGRK…APER), 255-295 (GHEA…SYGE), and 298-338 (VVTN…TETA). The stretch at 382–407 (TFGFGGRVVSVNLLEKGGRASKIKIT) is one WD 8; interaction with sec13 repeat. The segment covering 491 to 505 (EDEVNGEAAPKESRR) has biased composition (basic and acidic residues). Disordered regions lie at residues 491–511 (EDEVNGEAAPKESRRPGARKH), 801–845 (QPTT…PTSY), and 906–1176 (YAPA…RSHI). The span at 801-815 (QPTTRAQPATSTARV) shows a compositional bias: polar residues. A compositionally biased stretch (pro residues) spans 921–934 (APPPSVGGVPPPPR). Positions 973–992 (PASSAPISSPFPNQSPAVSQ) are enriched in low complexity. Composition is skewed to pro residues over residues 1006-1021 (SVPPPPKGVPPPPRMT), 1030-1043 (PPNPLSAVPPPPAN), and 1071-1080 (NAPPTIPPPS). Over residues 1084–1100 (APSPAAQAASPQLQARA) the composition is skewed to low complexity. Composition is skewed to pro residues over residues 1101–1120 (PVPPPPQAAASPYAPPPPAQ) and 1129–1146 (PSTPPPMQPPLQQVPPPQ). Residues 1152-1162 (PSTASSVKKAS) show a composition bias toward low complexity.

It belongs to the WD repeat SEC31 family. In terms of assembly, the COPII coat is composed of at least 5 proteins: the sec23/24 complex, the sec13/31 complex, and the protein sar1. sec13 and sec31 make a 2:2 tetramer that forms the edge element of the COPII outer coat. The tetramer self-assembles in multiple copies to form the complete polyhedral cage. Interacts (via WD 8) with sec13.

The protein localises to the cytoplasmic vesicle. It localises to the COPII-coated vesicle membrane. Its subcellular location is the endoplasmic reticulum membrane. Functionally, component of the coat protein complex II (COPII) which promotes the formation of transport vesicles from the endoplasmic reticulum (ER). The coat has two main functions, the physical deformation of the endoplasmic reticulum membrane into vesicles and the selection of cargo molecules. In Emericella nidulans (strain FGSC A4 / ATCC 38163 / CBS 112.46 / NRRL 194 / M139) (Aspergillus nidulans), this protein is Protein transport protein sec31 (sec31).